Reading from the N-terminus, the 132-residue chain is Myelin P2 protein (132 aa).

Residue Ser2 is modified to N-acetylserine. (9Z)-octadecenoate is bound at residue Arg107. Position 107 (Arg107) interacts with hexadecanoate. The cysteines at positions 118 and 125 are disulfide-linked. A (9Z)-octadecenoate-binding site is contributed by 127–129; sequence RIY. A hexadecanoate-binding site is contributed by 127–129; it reads RIY.

The protein belongs to the calycin superfamily. Fatty-acid binding protein (FABP) family. As to quaternary structure, monomer.

It localises to the cytoplasm. In terms of biological role, may play a role in lipid transport protein in Schwann cells. May bind cholesterol. This chain is Myelin P2 protein, found in Sus scrofa (Pig).